Reading from the N-terminus, the 331-residue chain is Sideroflexin-5 (331 aa).

The next 4 helical transmembrane spans lie at 104–126, 153–175, 243–265, and 278–300; these read PFGWITVTGMLLPNPSWPTLLFW, YIGAYGAAVTAACSISGGLTYFI, TTMVRAFLPVPLLLMPPCIMPYL, and HIFVNAIVCTLSFAVSLPVALAL.

The protein belongs to the sideroflexin family.

Its subcellular location is the mitochondrion inner membrane. It catalyses the reaction citrate(in) = citrate(out). Functionally, mitochondrial amino-acid transporter. The sequence is that of Sideroflexin-5 from Caenorhabditis elegans.